We begin with the raw amino-acid sequence, 95 residues long: Integration host factor subunit beta (95 aa).

Belongs to the bacterial histone-like protein family. Heterodimer of an alpha and a beta chain.

In terms of biological role, this protein is one of the two subunits of integration host factor, a specific DNA-binding protein that functions in genetic recombination as well as in transcriptional and translational control. This is Integration host factor subunit beta from Shewanella pealeana (strain ATCC 700345 / ANG-SQ1).